The primary structure comprises 105 residues: Small ribosomal subunit protein uS10 (105 aa).

This sequence belongs to the universal ribosomal protein uS10 family. As to quaternary structure, part of the 30S ribosomal subunit.

Functionally, involved in the binding of tRNA to the ribosomes. This chain is Small ribosomal subunit protein uS10, found in Desulfovibrio desulfuricans (strain ATCC 27774 / DSM 6949 / MB).